Consider the following 351-residue polypeptide: Glycerol-1-phosphate dehydrogenase [NAD(P)+] (351 aa).

Residues 97 to 101 and 119 to 122 contribute to the NAD(+) site; these read GKTID and TAPS. Aspartate 124 contributes to the substrate binding site. Serine 128 is a binding site for NAD(+). Residue aspartate 171 coordinates substrate. Zn(2+) contacts are provided by aspartate 171 and histidine 251. Position 255 (histidine 255) interacts with substrate. Histidine 267 lines the Zn(2+) pocket.

This sequence belongs to the glycerol-1-phosphate dehydrogenase family. In terms of assembly, homodimer. It depends on Zn(2+) as a cofactor.

It localises to the cytoplasm. The enzyme catalyses sn-glycerol 1-phosphate + NAD(+) = dihydroxyacetone phosphate + NADH + H(+). The catalysed reaction is sn-glycerol 1-phosphate + NADP(+) = dihydroxyacetone phosphate + NADPH + H(+). The protein operates within membrane lipid metabolism; glycerophospholipid metabolism. Functionally, catalyzes the NAD(P)H-dependent reduction of dihydroxyacetonephosphate (DHAP or glycerone phosphate) to glycerol 1-phosphate (G1P). The G1P thus generated is used as the glycerophosphate backbone of phospholipids in the cellular membranes of Archaea. The sequence is that of Glycerol-1-phosphate dehydrogenase [NAD(P)+] from Metallosphaera sedula (strain ATCC 51363 / DSM 5348 / JCM 9185 / NBRC 15509 / TH2).